Reading from the N-terminus, the 182-residue chain is ADP-ribosylation factor-like protein 3 (182 aa).

Gly-2 carries N-myristoyl glycine lipidation. At Ser-5 the chain carries Phosphoserine. GTP-binding positions include Gly-24 to Thr-31, Thr-48, Asp-67 to Gln-71, Gly-70, Asn-126 to Asp-129, and Ser-159 to Leu-161. 2 residues coordinate Mg(2+): Thr-31 and Thr-48.

It belongs to the small GTPase superfamily. Arf family. Found in a complex with ARL3, RP2 and UNC119 (or UNC119B); RP2 induces hydrolysis of GTP ARL3 in the complex, leading to the release of UNC119 (or UNC119B). Interacts with RP2; interaction is direct and stimulated with the activated GTP-bound form of ARL3. Interacts with SYS1. Interacts with ARL2BP; the GTP-bound form interacts with ARL2BP. Microtubule-associated protein. Does not interact with TBCC. Interacts with RP2. Interacts with PDE6D; the interaction occurs specifically with the GTP-bound form of ARL3. Interacts with GGA1; the interaction recruits PKD1:PKD2 complex to trans-Golgi network and is required for ciliary targeting of PKD1:PKD2 complex. Interacts with DNAAF9.

It is found in the golgi apparatus membrane. It localises to the cytoplasm. The protein localises to the cytoskeleton. Its subcellular location is the spindle. The protein resides in the nucleus. It is found in the microtubule organizing center. It localises to the centrosome. The protein localises to the cell projection. Its subcellular location is the cilium. Small GTP-binding protein which cycles between an inactive GDP-bound and an active GTP-bound form, and the rate of cycling is regulated by guanine nucleotide exchange factors (GEF) and GTPase-activating proteins (GAP). Required for normal cytokinesis and cilia signaling. Required for targeting proteins to the cilium, including myristoylated NPHP3 and prenylated INPP5E. Targets NPHP3 to the ciliary membrane by releasing myristoylated NPHP3 from UNC119B cargo adapter into the cilium. Requires assistance from GTPase-activating proteins (GAPs) like RP2 and PDE6D, in order to cycle between inactive GDP-bound and active GTP-bound forms. Required for PKD1:PKD2 complex targeting from the trans-Golgi network to the cilium. The chain is ADP-ribosylation factor-like protein 3 from Mus musculus (Mouse).